We begin with the raw amino-acid sequence, 101 residues long: Small ribosomal subunit protein uS14 (101 aa).

This sequence belongs to the universal ribosomal protein uS14 family. In terms of assembly, part of the 30S ribosomal subunit. Contacts proteins S3 and S10.

In terms of biological role, binds 16S rRNA, required for the assembly of 30S particles and may also be responsible for determining the conformation of the 16S rRNA at the A site. In Hydrogenovibrio crunogenus (strain DSM 25203 / XCL-2) (Thiomicrospira crunogena), this protein is Small ribosomal subunit protein uS14.